We begin with the raw amino-acid sequence, 652 residues long: Probable export ATP-binding/permease protein PFL_2149 (652 aa).

One can recognise an ABC transporter domain in the interval 6–244 (LHLTGISRSF…APSEPPVSVR (239 aa)). Residue 42-49 (GASGSGKS) coordinates ATP. Transmembrane regions (helical) follow at residues 251–271 (LVASLGLFKEAFVMAWVALVS), 277–297 (LLTMLGIVIGITSVVSIVAIG), 525–545 (LALLLSLIAVISLVVGGIGVM), 586–606 (IGGAIGISLSFAIGYLFTLFI), and 615–635 (MGSIITAFACSTLIGIVFGFV).

The protein belongs to the ABC transporter superfamily. Macrolide exporter (TC 3.A.1.122) family. In terms of assembly, probably part of a tripartite efflux system, which is composed of an inner membrane transporter, a periplasmic membrane fusion protein, and an outer membrane component.

The protein resides in the cell inner membrane. In terms of biological role, probably part of a tripartite efflux system. This chain is Probable export ATP-binding/permease protein PFL_2149, found in Pseudomonas fluorescens (strain ATCC BAA-477 / NRRL B-23932 / Pf-5).